A 366-amino-acid polypeptide reads, in one-letter code: Histidinol-phosphate aminotransferase (366 aa).

Lysine 228 is modified (N6-(pyridoxal phosphate)lysine).

Belongs to the class-II pyridoxal-phosphate-dependent aminotransferase family. Histidinol-phosphate aminotransferase subfamily. As to quaternary structure, homodimer. The cofactor is pyridoxal 5'-phosphate.

It carries out the reaction L-histidinol phosphate + 2-oxoglutarate = 3-(imidazol-4-yl)-2-oxopropyl phosphate + L-glutamate. It participates in amino-acid biosynthesis; L-histidine biosynthesis; L-histidine from 5-phospho-alpha-D-ribose 1-diphosphate: step 7/9. The chain is Histidinol-phosphate aminotransferase from Stutzerimonas stutzeri (Pseudomonas stutzeri).